We begin with the raw amino-acid sequence, 402 residues long: Putative F-box protein At4g22180 (402 aa).

The 47-residue stretch at 18-64 (PNSWSELPLDLLTAVFERLSYANFQRAKSVCSSWHSGSRQSVPIQIP) folds into the F-box domain.

The polypeptide is Putative F-box protein At4g22180 (Arabidopsis thaliana (Mouse-ear cress)).